The chain runs to 102 residues: NADH-quinone oxidoreductase subunit K 2 (102 aa).

Helical transmembrane passes span 6–26, 30–50, and 66–86; these read LEAF…GIIA, LVTV…ALVG, and FIIA…IAIF.

This sequence belongs to the complex I subunit 4L family. As to quaternary structure, NDH-1 is composed of 14 different subunits. Subunits NuoA, H, J, K, L, M, N constitute the membrane sector of the complex.

The protein resides in the cell inner membrane. The enzyme catalyses a quinone + NADH + 5 H(+)(in) = a quinol + NAD(+) + 4 H(+)(out). In terms of biological role, NDH-1 shuttles electrons from NADH, via FMN and iron-sulfur (Fe-S) centers, to quinones in the respiratory chain. The immediate electron acceptor for the enzyme in this species is believed to be ubiquinone. Couples the redox reaction to proton translocation (for every two electrons transferred, four hydrogen ions are translocated across the cytoplasmic membrane), and thus conserves the redox energy in a proton gradient. This Aquifex aeolicus (strain VF5) protein is NADH-quinone oxidoreductase subunit K 2.